The primary structure comprises 119 residues: Large ribosomal subunit protein uL18 (119 aa).

Belongs to the universal ribosomal protein uL18 family. In terms of assembly, part of the 50S ribosomal subunit; part of the 5S rRNA/L5/L18/L25 subcomplex. Contacts the 5S and 23S rRNAs.

In terms of biological role, this is one of the proteins that bind and probably mediate the attachment of the 5S RNA into the large ribosomal subunit, where it forms part of the central protuberance. In Borreliella afzelii (strain PKo) (Borrelia afzelii), this protein is Large ribosomal subunit protein uL18.